The primary structure comprises 200 residues: MSLLIERARYHLSAHNVRQLPPDEGAEVAFAGRSNAGKSSALNALTRQNALARVSKTPGRTQQLVFFQVTPEAHLVDLPGYGYAKVPLDLQAHWQAFIDKYFRTREALKGLVVVMDIRHPLKDYDRQMLSYAVQRGLPAHALLTKADKLSRSQQMQSLQKVRKELQSAYGDSVSVQVFSGEDRTGVDEARGVIGGWLGLE.

The EngB-type G domain occupies 24-199 (EGAEVAFAGR…RGVIGGWLGL (176 aa)). GTP contacts are provided by residues 32 to 39 (GRSNAGKS), 59 to 63 (GRTQQ), 77 to 80 (DLPG), 144 to 147 (TKAD), and 178 to 180 (FSG). Serine 39 and threonine 61 together coordinate Mg(2+).

The protein belongs to the TRAFAC class TrmE-Era-EngA-EngB-Septin-like GTPase superfamily. EngB GTPase family. It depends on Mg(2+) as a cofactor.

In terms of biological role, necessary for normal cell division and for the maintenance of normal septation. The protein is Probable GTP-binding protein EngB of Stenotrophomonas maltophilia (strain K279a).